A 181-amino-acid chain; its full sequence is Alkyl hydroperoxide reductase AhpD (181 aa).

Cys131 serves as the catalytic Proton donor. An intrachain disulfide couples Cys131 to Cys134. Cys134 (cysteine sulfenic acid (-SOH) intermediate) is an active-site residue.

The protein belongs to the AhpD family.

It carries out the reaction N(6)-[(R)-dihydrolipoyl]-L-lysyl-[lipoyl-carrier protein] + a hydroperoxide = N(6)-[(R)-lipoyl]-L-lysyl-[lipoyl-carrier protein] + an alcohol + H2O. Antioxidant protein with alkyl hydroperoxidase activity. Required for the reduction of the AhpC active site cysteine residues and for the regeneration of the AhpC enzyme activity. In Rhodopseudomonas palustris (strain BisA53), this protein is Alkyl hydroperoxide reductase AhpD.